The sequence spans 311 residues: MTEIDFDIAIIGAGPAGMTAAVYASRANLKTVMIERGIPGGQMANTEEVENFPGFEMITGPDLSTKMFEHAKKFGAVYQYGDIKSVEDKGEYKVINFGNKELTAKAVIIATGAEYKKIGVPGEQELGGRGVSYCAVCDGAFFKNKRLFVIGGGDSAVEEGTFLTKFADKVTIVHRRDELRAQRILQDRAFKNDKIDFIWSHTLKSINEKDGKVGSVTLTSTKDGSEETHEADGVFIYIGMKPLTAPFKDLGITNDVGYIVTKDDMTTSAPGIFAAGDVRDKGLRQIVTATGDGSIAAQSAAEYIEHLNDQA.

Position 35–42 (35–42 (ERGIPGGQ)) interacts with FAD. The cysteines at positions 134 and 137 are disulfide-linked. 277 to 286 (DVRDKGLRQI) contributes to the FAD binding site.

Belongs to the class-II pyridine nucleotide-disulfide oxidoreductase family. Homodimer. The cofactor is FAD.

The protein resides in the cytoplasm. The enzyme catalyses [thioredoxin]-dithiol + NADP(+) = [thioredoxin]-disulfide + NADPH + H(+). The polypeptide is Thioredoxin reductase (trxB) (Staphylococcus aureus (strain MRSA252)).